A 301-amino-acid chain; its full sequence is Probable cyclic nucleotide phosphodiesterase RER_40650 (301 aa).

The Fe cation site is built by D20, H22, D61, N95, H167, H205, and H207. Residues H22, D61, and 95 to 96 (NH) each bind AMP. H207 lines the AMP pocket.

The protein belongs to the cyclic nucleotide phosphodiesterase class-III family. Fe(2+) is required as a cofactor.

This chain is Probable cyclic nucleotide phosphodiesterase RER_40650, found in Rhodococcus erythropolis (strain PR4 / NBRC 100887).